Consider the following 102-residue polypeptide: Acylphosphatase 1 (102 aa).

In terms of domain architecture, Acylphosphatase-like spans Thr12–Pro100. Active-site residues include Arg27 and Asn45.

It belongs to the acylphosphatase family.

The catalysed reaction is an acyl phosphate + H2O = a carboxylate + phosphate + H(+). This is Acylphosphatase 1 (acyP1) from Ralstonia nicotianae (strain ATCC BAA-1114 / GMI1000) (Ralstonia solanacearum).